The following is a 371-amino-acid chain: Aminomethyltransferase (371 aa).

The protein belongs to the GcvT family. The glycine cleavage system is composed of four proteins: P, T, L and H.

It catalyses the reaction N(6)-[(R)-S(8)-aminomethyldihydrolipoyl]-L-lysyl-[protein] + (6S)-5,6,7,8-tetrahydrofolate = N(6)-[(R)-dihydrolipoyl]-L-lysyl-[protein] + (6R)-5,10-methylene-5,6,7,8-tetrahydrofolate + NH4(+). Its function is as follows. The glycine cleavage system catalyzes the degradation of glycine. This Pectobacterium carotovorum subsp. carotovorum (strain PC1) protein is Aminomethyltransferase.